The following is a 131-amino-acid chain: MSEIPGDLKFLKSHEWARVESNGRVTVGISDHAQGLLGDLVYVELPGVGDTVQVGNGAAVVESVKAASDVYSPVSGTVVEVNSALSDKPETINEDAYGEGWIFVVEIDDKEQLNDLLDPDDYAELLEDDDH.

The Lipoyl-binding domain occupies 24-106 (RVTVGISDHA…YGEGWIFVVE (83 aa)). K65 is subject to N6-lipoyllysine.

This sequence belongs to the GcvH family. As to quaternary structure, the glycine cleavage system is composed of four proteins: P, T, L and H. Requires (R)-lipoate as cofactor.

In terms of biological role, the glycine cleavage system catalyzes the degradation of glycine. The H protein shuttles the methylamine group of glycine from the P protein to the T protein. This chain is Glycine cleavage system H protein, found in Xanthomonas axonopodis pv. citri (strain 306).